The following is a 715-amino-acid chain: NADH-ubiquinone oxidoreductase chain 5 (715 aa).

17 helical membrane-spanning segments follow: residues 1 to 21, 30 to 50, 81 to 101, 119 to 139, 140 to 160, 177 to 197, 200 to 220, 241 to 261, 274 to 294, 310 to 330, 331 to 351, 366 to 386, 403 to 423, 487 to 507, 543 to 563, 647 to 667, and 668 to 688; these read MYLS…FFGR, LITC…FFEV, LTVA…IYSI, LFTF…MFVG, WEGV…RIAA, FLTI…YATV, LAPY…LIGA, TPVS…YLLM, LLLC…IGLF, LGMM…FHLI, NHAF…HAVA, LPLT…FPYM, FSFS…FTTL, GFFL…FGFI, TLFK…ALVL, IVTN…FTFI, and SLLE…LSLT.

It belongs to the complex I subunit 5 family.

The protein localises to the mitochondrion inner membrane. The catalysed reaction is a ubiquinone + NADH + 5 H(+)(in) = a ubiquinol + NAD(+) + 4 H(+)(out). Functionally, core subunit of the mitochondrial membrane respiratory chain NADH dehydrogenase (Complex I) that is believed to belong to the minimal assembly required for catalysis. Complex I functions in the transfer of electrons from NADH to the respiratory chain. The immediate electron acceptor for the enzyme is believed to be ubiquinone. The protein is NADH-ubiquinone oxidoreductase chain 5 (ndh-5) of Neurospora crassa (strain ATCC 24698 / 74-OR23-1A / CBS 708.71 / DSM 1257 / FGSC 987).